Consider the following 341-residue polypeptide: KH domain-containing RNA-binding protein qki.S (341 aa).

Residues 88-154 (YVPVKEYPDF…WEHLNEDLHV (67 aa)) enclose the KH domain. Positions 324–330 (RVHPYQR) match the Nuclear localization signal motif.

This sequence belongs to the quaking family. As to quaternary structure, homodimer; does not require RNA to homodimerize.

It localises to the nucleus. The protein localises to the cytoplasm. Its function is as follows. RNA reader protein, which recognizes and binds specific RNAs, thereby regulating RNA metabolic processes, such as pre-mRNA splicing, circular RNA (circRNA) formation, mRNA export, mRNA stability and/or translation. Involved in various cellular processes, such as mRNA storage into stress granules, apoptosis, interferon response, glial cell fate and development. Binds to the 5'-NACUAAY-N(1,20)-UAAY-3' RNA core sequence. Acts as a mRNA modification reader that specifically recognizes and binds mRNA transcripts modified by internal N(7)-methylguanine (m7G). Promotes the formation of circular RNAs (circRNAs): acts by binding to sites flanking circRNA-forming exons. CircRNAs are produced by back-splicing circularization of pre-mRNAs. Required to protect and promote stability of mRNAs which promotes oligodendrocyte differentiation. Acts as an important regulator of muscle development. Essential for notochord development. In Xenopus laevis (African clawed frog), this protein is KH domain-containing RNA-binding protein qki.S.